A 368-amino-acid polypeptide reads, in one-letter code: Peptide chain release factor 2 (368 aa).

Glutamine 245 is modified (N5-methylglutamine).

Belongs to the prokaryotic/mitochondrial release factor family. In terms of processing, methylated by PrmC. Methylation increases the termination efficiency of RF2.

The protein localises to the cytoplasm. Functionally, peptide chain release factor 2 directs the termination of translation in response to the peptide chain termination codons UGA and UAA. The protein is Peptide chain release factor 2 (prfB) of Treponema pallidum (strain Nichols).